The sequence spans 471 residues: MAESNSWRSHRESDGNRSIPNGDDARNVRETGVQTDAKVQGQGPRLSKANLFTLLSLWMELFPKREACQQENDAAGVSGLVVVHECRVLGLHCSSAQLHAGQVAVVKHGPRLKSCELYFSRKPCSTCLKMLINAGVSRISYWPGDAELSLLSESLHHGSSSALQEAVLDATAAERLKSNSRPHISVLLQPLDCTVLQFLDETSQNADFLGKIVADNPALDTGDIYRREFWNNSDNFLEKFFISDEERHKYVLNKMGLENFCMEPNFSNLRQHMRNLIRILASVASSVPALLEDYGFFMREPVGMGSPGLPQGVIRHCVIQARLLACRTEDPKVGVGAVIWAEGKQSQCDGTGQLYLVGCGYNAYPVGSQYAEYPQMDHKQEERQNRKYRYILHAEQNALTFRSAEIKAEDNTMMFVTKCPCDECVPLIGCAGIKQIYTTDLDSNKVKHDISYLRFNKLNGVQKFIVSVREK.

The tract at residues 1-27 (MAESNSWRSHRESDGNRSIPNGDDARN) is disordered. CMP/dCMP-type deaminase domains are found at residues 57–153 (LWME…LLSE) and 312–460 (GVIR…KLNG). The Zn(2+) site is built by H99, C124, C127, and H393. E395 acts as the Proton donor in catalysis. Zn(2+) is bound by residues C421 and C424.

The protein belongs to the cytidine and deoxycytidylate deaminase family. Zn(2+) is required as a cofactor.

The enzyme catalyses 2'-deoxycytidine + H2O + H(+) = 2'-deoxyuridine + NH4(+). It catalyses the reaction cytidine + H2O + H(+) = uridine + NH4(+). Catalyzes the deamination of cytidine and deoxycytidine into uridine and deoxyuridine, respectively. In Danio rerio (Zebrafish), this protein is Cytidine and dCMP deaminase domain-containing protein 1 (cdadc1).